Consider the following 337-residue polypeptide: tRNA N6-adenosine threonylcarbamoyltransferase (337 aa).

Fe cation-binding residues include histidine 111 and histidine 115. Residues 134-138 (LVSGG), aspartate 167, glycine 180, and asparagine 272 each bind substrate. Aspartate 300 provides a ligand contact to Fe cation.

The protein belongs to the KAE1 / TsaD family. It depends on Fe(2+) as a cofactor.

The protein localises to the cytoplasm. The enzyme catalyses L-threonylcarbamoyladenylate + adenosine(37) in tRNA = N(6)-L-threonylcarbamoyladenosine(37) in tRNA + AMP + H(+). In terms of biological role, required for the formation of a threonylcarbamoyl group on adenosine at position 37 (t(6)A37) in tRNAs that read codons beginning with adenine. Is involved in the transfer of the threonylcarbamoyl moiety of threonylcarbamoyl-AMP (TC-AMP) to the N6 group of A37, together with TsaE and TsaB. TsaD likely plays a direct catalytic role in this reaction. This chain is tRNA N6-adenosine threonylcarbamoyltransferase, found in Pectobacterium atrosepticum (strain SCRI 1043 / ATCC BAA-672) (Erwinia carotovora subsp. atroseptica).